A 238-amino-acid polypeptide reads, in one-letter code: Dolichyldiphosphatase 1 (238 aa).

Helical transmembrane passes span 33-53 (LAYL…LIIF), 100-120 (PSSH…FLYL), 130-150 (FLDL…AFLV), and 162-182 (WSQV…WFIF).

It belongs to the dolichyldiphosphatase family.

The protein resides in the endoplasmic reticulum membrane. The catalysed reaction is a di-trans,poly-cis-dolichyl diphosphate + H2O = a di-trans,poly-cis-dolichyl phosphate + phosphate + H(+). The protein operates within protein modification; protein glycosylation. Functionally, required for efficient N-glycosylation. Necessary for maintaining optimal levels of dolichol-linked oligosaccharides. Hydrolyzes dolichyl pyrophosphate at a very high rate and dolichyl monophosphate at a much lower rate. Does not act on phosphatidate. This is Dolichyldiphosphatase 1 (DOLPP1) from Callithrix jacchus (White-tufted-ear marmoset).